The sequence spans 1023 residues: Transmembrane protein 132A (1023 aa).

The signal sequence occupies residues 1 to 35 (MCARMAGRTTAAPRGPYGPWLCLLVALALDVVRVD). Topologically, residues 36 to 852 (CGQAPLDPVY…VTELELGMYA (817 aa)) are extracellular. Positions 212-246 (AAEGPGGCGSGEENDPGEQALPVGGVELRPADPPQ) are disordered. Asn280 carries an N-linked (GlcNAc...) asparagine glycan. Disordered regions lie at residues 512 to 533 (WRVPGPAEGPAEPAAEASDEAE) and 766 to 839 (LPPA…MVPA). A compositionally biased stretch (low complexity) spans 515 to 527 (PGPAEGPAEPAAE). Ser529 is modified (phosphoserine; by FAM20C). The tract at residues 611 to 916 (IEVRSPLSDS…RQLDRQSPGP (306 aa)) is binds to HSPA5/GRP78. The tract at residues 671–1023 (LPAPKQEVAL…NYMERIRGSS (353 aa)) is confers cellular localization similar to full-length form. Residues 778-790 (SSPAWSPPATEAT) are compositionally biased toward low complexity. The span at 809-823 (GKFERAEEEARKEET) shows a compositional bias: basic and acidic residues. Acidic residues predominate over residues 824 to 836 (EAREEEEEEEEEM). Residues 853–873 (LLGVFCVAIFIFLVNGVVFVL) form a helical membrane-spanning segment. The Cytoplasmic portion of the chain corresponds to 874–1023 (RYQRKEPPDS…NYMERIRGSS (150 aa)). The tract at residues 905–961 (LSRQLDRQSPGPPKGEGSCPCESGGGGEAPTLAPGPPGGTTSSSSTLARKEAGGRRK) is disordered.

This sequence belongs to the TMEM132 family. Interacts with HSPA5/GRP78.

The protein resides in the golgi apparatus membrane. It is found in the endoplasmic reticulum membrane. Functionally, may play a role in embryonic and postnatal development of the brain. Increased resistance to cell death induced by serum starvation in cultured cells. Regulates cAMP-induced GFAP gene expression via STAT3 phosphorylation. The polypeptide is Transmembrane protein 132A (TMEM132A) (Homo sapiens (Human)).